Here is an 88-residue protein sequence, read N- to C-terminus: UPF0335 protein WRi_003770 (88 aa).

Belongs to the UPF0335 family.

This Wolbachia sp. subsp. Drosophila simulans (strain wRi) protein is UPF0335 protein WRi_003770.